The chain runs to 590 residues: DNA mismatch repair protein MutL (590 aa).

Residues 335–351 (PLSSASPKLPESTTATA) are compositionally biased toward polar residues. Residues 335 to 354 (PLSSASPKLPESTTATAQPH) form a disordered region.

It belongs to the DNA mismatch repair MutL/HexB family.

This protein is involved in the repair of mismatches in DNA. It is required for dam-dependent methyl-directed DNA mismatch repair. May act as a 'molecular matchmaker', a protein that promotes the formation of a stable complex between two or more DNA-binding proteins in an ATP-dependent manner without itself being part of a final effector complex. This is DNA mismatch repair protein MutL from Dichelobacter nodosus (strain VCS1703A).